A 190-amino-acid chain; its full sequence is 3-isopropylmalate dehydratase small subunit (190 aa).

Belongs to the LeuD family. LeuD type 1 subfamily. Heterodimer of LeuC and LeuD.

It catalyses the reaction (2R,3S)-3-isopropylmalate = (2S)-2-isopropylmalate. Its pathway is amino-acid biosynthesis; L-leucine biosynthesis; L-leucine from 3-methyl-2-oxobutanoate: step 2/4. Its function is as follows. Catalyzes the isomerization between 2-isopropylmalate and 3-isopropylmalate, via the formation of 2-isopropylmaleate. This is 3-isopropylmalate dehydratase small subunit from Staphylococcus aureus (strain MRSA252).